Consider the following 460-residue polypeptide: Dihydroorotate dehydrogenase (quinone), mitochondrial (460 aa).

The N-terminal 32 residues, 1-32 (MAGRAATSSAKWAREFLFRRVSSNPLGATRNC), are a transit peptide targeting the mitochondrion. Residues 53-69 (ILTGATIGLAIAGGAYV) form a helical membrane-spanning segment. Residues 141–145 (AGFDK) and Ser165 each bind FMN. Position 145 (Lys145) interacts with substrate. Position 190-194 (190-194 (NRCGF)) interacts with substrate. The disordered stretch occupies residues 213 to 245 (RMLAETSATSSSPSDDVKPGGKSGPGILGVNLG). FMN contacts are provided by Asn243 and Asn274. 274 to 279 (NVSSPN) contributes to the substrate binding site. The Nucleophile role is filled by Ser277. FMN contacts are provided by Lys319 and Ser347. Position 348 to 349 (348 to 349 (NT)) interacts with substrate. Residues Gly371, Gly400, and 421–422 (YT) contribute to the FMN site.

The protein belongs to the dihydroorotate dehydrogenase family. Type 2 subfamily. FMN is required as a cofactor.

It localises to the mitochondrion inner membrane. It catalyses the reaction (S)-dihydroorotate + a quinone = orotate + a quinol. It participates in pyrimidine metabolism; UMP biosynthesis via de novo pathway; orotate from (S)-dihydroorotate (quinone route): step 1/1. Functionally, catalyzes the conversion of dihydroorotate to orotate with quinone as electron acceptor. This Arabidopsis thaliana (Mouse-ear cress) protein is Dihydroorotate dehydrogenase (quinone), mitochondrial (PYRD).